A 239-amino-acid polypeptide reads, in one-letter code: MEERPERLISEDGLRLDGRKPDEMRPLKIQAGVLKRADGSAYLELGANKIVAAVYGPRELHPRHKQKPDRAVVRFRYNMAPFSVDERKRPGPDRRSIEISKLSKEALEPAIFTEYYPRTAIDIFVEVLQADAGTRCAGISAASVALADAGIEMRDLVAACAAGKVEGKVVLDPMYYEDGYGEADVPLAMMPKEGKITLLQMDGDMTPGEFKQAVKLAKKGCKIVYKEQRRALKEKYGGD.

The tract at residues 1–21 is disordered; the sequence is MEERPERLISEDGLRLDGRKP.

Belongs to the RNase PH family. Rrp41 subfamily. Component of the archaeal exosome complex. Forms a hexameric ring-like arrangement composed of 3 Rrp41-Rrp42 heterodimers. The hexameric ring associates with a trimer of Rrp4 and/or Csl4 subunits.

It is found in the cytoplasm. Catalytic component of the exosome, which is a complex involved in RNA degradation. Has 3'-&gt;5' exoribonuclease activity. Can also synthesize heteromeric RNA-tails. The chain is Exosome complex component Rrp41 from Methanopyrus kandleri (strain AV19 / DSM 6324 / JCM 9639 / NBRC 100938).